Reading from the N-terminus, the 578-residue chain is CTP synthase (578 aa).

Residues 305–559 enclose the Glutamine amidotransferase type-1 domain; the sequence is KIALVGKYTN…LGLVAASSGI (255 aa). Catalysis depends on for GATase activity residues C404, H535, and E537.

This sequence belongs to the CTP synthase family.

It catalyses the reaction UTP + L-glutamine + ATP + H2O = CTP + L-glutamate + ADP + phosphate + 2 H(+). Its pathway is pyrimidine metabolism; CTP biosynthesis via de novo pathway; CTP from UDP: step 2/2. Functionally, catalyzes the ATP-dependent amination of UTP to CTP with either L-glutamine or ammonia as the source of nitrogen. The chain is CTP synthase (URA7) from Candida glabrata (strain ATCC 2001 / BCRC 20586 / JCM 3761 / NBRC 0622 / NRRL Y-65 / CBS 138) (Yeast).